The primary structure comprises 250 residues: 3-deoxy-manno-octulosonate cytidylyltransferase (250 aa).

It belongs to the KdsB family.

The protein localises to the cytoplasm. The enzyme catalyses 3-deoxy-alpha-D-manno-oct-2-ulosonate + CTP = CMP-3-deoxy-beta-D-manno-octulosonate + diphosphate. The protein operates within nucleotide-sugar biosynthesis; CMP-3-deoxy-D-manno-octulosonate biosynthesis; CMP-3-deoxy-D-manno-octulosonate from 3-deoxy-D-manno-octulosonate and CTP: step 1/1. It participates in bacterial outer membrane biogenesis; lipopolysaccharide biosynthesis. Its function is as follows. Activates KDO (a required 8-carbon sugar) for incorporation into bacterial lipopolysaccharide in Gram-negative bacteria. This is 3-deoxy-manno-octulosonate cytidylyltransferase from Legionella pneumophila (strain Paris).